The primary structure comprises 348 residues: Oxygen-dependent coproporphyrinogen-III oxidase (348 aa).

Residue serine 104 coordinates substrate. Histidine 108 and histidine 118 together coordinate a divalent metal cation. The Proton donor role is filled by histidine 118. Position 120 to 122 (120 to 122 (NYR)) interacts with substrate. Histidine 152 and histidine 182 together coordinate a divalent metal cation. Residues 272 to 307 (YAEFNLVWDRGTIFGLQTNGRTESILMSLPPLARWE) are important for dimerization.

The protein belongs to the aerobic coproporphyrinogen-III oxidase family. In terms of assembly, homodimer. The cofactor is a divalent metal cation.

The protein localises to the cytoplasm. The enzyme catalyses coproporphyrinogen III + O2 + 2 H(+) = protoporphyrinogen IX + 2 CO2 + 2 H2O. Its pathway is porphyrin-containing compound metabolism; protoporphyrin-IX biosynthesis; protoporphyrinogen-IX from coproporphyrinogen-III (O2 route): step 1/1. Involved in the heme and chlorophyll biosynthesis. Catalyzes the aerobic oxidative decarboxylation of propionate groups of rings A and B of coproporphyrinogen-III to yield the vinyl groups in protoporphyrinogen-IX. This Prochlorococcus marinus (strain NATL2A) protein is Oxygen-dependent coproporphyrinogen-III oxidase.